A 162-amino-acid chain; its full sequence is D-beta-D-heptose 1-phosphate adenylyltransferase (162 aa).

It catalyses the reaction D-glycero-beta-D-manno-heptose 1-phosphate + ATP + H(+) = ADP-D-glycero-beta-D-manno-heptose + diphosphate. The protein operates within nucleotide-sugar biosynthesis; ADP-L-glycero-beta-D-manno-heptose biosynthesis; ADP-L-glycero-beta-D-manno-heptose from D-glycero-beta-D-manno-heptose 7-phosphate: step 3/4. It participates in bacterial outer membrane biogenesis; LPS core biosynthesis. In terms of biological role, catalyzes the ADP transfer from ATP to D-glycero-beta-D-manno-heptose 1-phosphate, yielding ADP-D-glycero-beta-D-manno-heptose. Cannot use GTP, UTP, or CTP as substrate. Is not active against the alpha-anomer substrate. Is also able to catalyze the ADP transfer to beta-glucose 1-phosphate in vitro, yielding ADP-beta-glucose. The chain is D-beta-D-heptose 1-phosphate adenylyltransferase from Bordetella bronchiseptica (strain ATCC BAA-588 / NCTC 13252 / RB50) (Alcaligenes bronchisepticus).